The primary structure comprises 170 residues: Protein-lysine myristoyltransferase HlyC (170 aa).

Histidine 23 is a catalytic residue. Histidine 151 provides a ligand contact to heme.

Belongs to the RTX toxin acyltransferase family. Monomer. Proteolytically cleaved by the protease systems ClpAP, ClpXP and FtsH, leading to its degradation.

The protein localises to the cytoplasm. It carries out the reaction tetradecanoyl-[ACP] + L-lysyl-[protein] = N(6)-tetradecanoyl-L-lysyl-[protein] + holo-[ACP] + H(+). The acyltransferase activity is inhibited by heme. Functionally, protein-lysine myristoyltransferase that catalyzes myristoylation of the protoxin (HlyA) at two internal lysine residues, thereby converting it to the active toxin. This chain is Protein-lysine myristoyltransferase HlyC, found in Escherichia coli.